Reading from the N-terminus, the 154-residue chain is Myoglobin (154 aa).

In terms of domain architecture, Globin spans 2–148 (GLSDGEWQLV…FRNDMAAQYK (147 aa)). Residue serine 4 is modified to Phosphoserine. Histidine 65 is a nitrite binding site. Residue histidine 65 coordinates O2. At threonine 68 the chain carries Phosphothreonine. Position 94 (histidine 94) interacts with heme b.

This sequence belongs to the globin family. As to quaternary structure, monomeric.

The protein localises to the cytoplasm. It localises to the sarcoplasm. It catalyses the reaction Fe(III)-heme b-[protein] + nitric oxide + H2O = Fe(II)-heme b-[protein] + nitrite + 2 H(+). The catalysed reaction is H2O2 + AH2 = A + 2 H2O. Monomeric heme protein which primary function is to store oxygen and facilitate its diffusion within muscle tissues. Reversibly binds oxygen through a pentacoordinated heme iron and enables its timely and efficient release as needed during periods of heightened demand. Depending on the oxidative conditions of tissues and cells, and in addition to its ability to bind oxygen, it also has a nitrite reductase activity whereby it regulates the production of bioactive nitric oxide. Under stress conditions, like hypoxia and anoxia, it also protects cells against reactive oxygen species thanks to its pseudoperoxidase activity. In Bos mutus grunniens (Wild yak), this protein is Myoglobin (MB).